The primary structure comprises 164 residues: Phosphopantetheine adenylyltransferase (164 aa).

Ser11 contributes to the substrate binding site. ATP is bound by residues 11–12 (SF) and His19. Substrate-binding residues include Lys43, Leu75, and Arg89. ATP contacts are provided by residues 90–92 (GLR), Glu100, and 125–131 (YGYLSSS).

The protein belongs to the bacterial CoaD family. As to quaternary structure, homohexamer. It depends on Mg(2+) as a cofactor.

The protein resides in the cytoplasm. It carries out the reaction (R)-4'-phosphopantetheine + ATP + H(+) = 3'-dephospho-CoA + diphosphate. Its pathway is cofactor biosynthesis; coenzyme A biosynthesis; CoA from (R)-pantothenate: step 4/5. Its function is as follows. Reversibly transfers an adenylyl group from ATP to 4'-phosphopantetheine, yielding dephospho-CoA (dPCoA) and pyrophosphate. In Geobacter sulfurreducens (strain ATCC 51573 / DSM 12127 / PCA), this protein is Phosphopantetheine adenylyltransferase.